Reading from the N-terminus, the 171-residue chain is Probable DNA-directed RNA polymerase subunit delta (171 aa).

An HTH HARE-type domain is found at 14-81 (MALVEIAYEI…SDQTWGLRSW (68 aa)). Residues 138–171 (EFDEIDEADDDELDDLEDEILDDDEDFDEEEDEE) form a disordered region.

Belongs to the RpoE family. RNAP is composed of a core of 2 alpha, a beta and a beta' subunits. The core is associated with a delta subunit and one of several sigma factors.

Functionally, participates in both the initiation and recycling phases of transcription. In the presence of the delta subunit, RNAP displays an increased specificity of transcription, a decreased affinity for nucleic acids, and an increased efficiency of RNA synthesis because of enhanced recycling. The sequence is that of Probable DNA-directed RNA polymerase subunit delta from Bacillus licheniformis (strain ATCC 14580 / DSM 13 / JCM 2505 / CCUG 7422 / NBRC 12200 / NCIMB 9375 / NCTC 10341 / NRRL NRS-1264 / Gibson 46).